The sequence spans 116 residues: MTNKIILALEAEQMTKEIPTFAPGDTIVVQVKVKEGDRSRLQAFEGVVIAKRNRGVNSAFTVRKISNGVGVERTFQTYSPQIDSMAVKRRGDVRKAKLYYLRDLSGKAARIKEKLA.

Belongs to the bacterial ribosomal protein bL19 family.

In terms of biological role, this protein is located at the 30S-50S ribosomal subunit interface and may play a role in the structure and function of the aminoacyl-tRNA binding site. This is Large ribosomal subunit protein bL19 from Pseudomonas fluorescens (strain Pf0-1).